A 298-amino-acid polypeptide reads, in one-letter code: Golgi to ER traffic protein 2 (298 aa).

At M1–L164 the chain is on the cytoplasmic side. The interval I40–A92 is disordered. Over residues S42–V55 the composition is skewed to low complexity. Residues L56 to D67 show a composition bias toward basic and acidic residues. A helical membrane pass occupies residues W165–Y185. At I186–D211 the chain is on the lumenal side. The helical transmembrane segment at F212 to F231 threads the bilayer. Over H232–E275 the chain is Cytoplasmic. The helical transmembrane segment at L276–F296 threads the bilayer. At A297 to N298 the chain is on the lumenal side.

Belongs to the GET2 family. In terms of assembly, component of the Golgi to ER traffic (GET) complex, which is composed of GET1, GET2 and GET3. Within the complex, GET1 and GET2 form a heterotetramer which is stabilized by phosphatidylinositol binding and which binds to the GET3 homodimer.

The protein localises to the endoplasmic reticulum membrane. The protein resides in the golgi apparatus membrane. Functionally, required for the post-translational delivery of tail-anchored (TA) proteins to the endoplasmic reticulum. Together with GET1, acts as a membrane receptor for soluble GET3, which recognizes and selectively binds the transmembrane domain of TA proteins in the cytosol. The GET complex cooperates with the HDEL receptor ERD2 to mediate the ATP-dependent retrieval of resident ER proteins that contain a C-terminal H-D-E-L retention signal from the Golgi to the ER. The protein is Golgi to ER traffic protein 2 of Candida albicans (strain SC5314 / ATCC MYA-2876) (Yeast).